The chain runs to 559 residues: Aminopeptidase Q (559 aa).

Topologically, residues 1 to 13 (MSRPFSSGVYVSR) are cytoplasmic. The helical; Signal-anchor for type II membrane protein transmembrane segment at 14 to 34 (GVALLLAALTAVLLLVLVALA) threads the bilayer. Over 35-559 (SLYGSCAHVQ…VPFRHFLAEH (525 aa)) the chain is Lumenal. Asparagine 121 and asparagine 129 each carry an N-linked (GlcNAc...) asparagine glycan. Position 237 (glutamate 237) interacts with substrate. 3 N-linked (GlcNAc...) asparagine glycosylation sites follow: asparagine 258, asparagine 285, and asparagine 343. Residue 376 to 380 (GAMEN) participates in substrate binding. Histidine 412 serves as a coordination point for Zn(2+). The Proton acceptor role is filled by glutamate 413. Residues histidine 416 and glutamate 435 each contribute to the Zn(2+) site.

This sequence belongs to the peptidase M1 family. As to quaternary structure, homodimer. Requires Zn(2+) as cofactor. Post-translationally, N-glycosylated.

Its subcellular location is the membrane. Inhibited by bestatin. Metalloprotease which may be important for placentation by regulating biological activity of key peptides at the embryo-maternal interface. On synthetic substrates it shows a marked preference for Leu-4-methylcoumaryl-7-amide (Leu-MCA) over Met-MCA, Arg-LCA and Lys-LCA. Cleaves the N-terminal amino acid of several peptides such as angiotensin-3, kisspeptin-10 and endokinin C. This chain is Aminopeptidase Q, found in Mus musculus (Mouse).